The sequence spans 1216 residues: Phospholipase D B (1216 aa).

The span at 1-14 shows a compositional bias: polar residues; sequence MNLSQEHAINQNLH. A disordered region spans residues 1 to 48; sequence MNLSQEHAINQNLHKNQKNEEKIEKKTINKDGRGQMNYDGEEGQGEKS. Positions 17 to 33 are enriched in basic and acidic residues; sequence QKNEEKIEKKTINKDGR. EF-hand domains follow at residues 196 to 231 and 232 to 267; these read RNAD…MCRG and TKKE…ISDI. Ca(2+) is bound by residues Asp209, Asn211, Asp213, Lys215, and Glu220. The PH domain maps to 347–462; it reads EINMNGQLTK…WVNAIRFHSR (116 aa). The PLD phosphodiesterase 1 domain occupies 585–612; that stretch reads LSWSHHQKNAIIDQQIAFVGGIDICLMR. Active-site residues include His590, Lys592, and Asp597. Residues 732 to 844 are disordered; the sequence is VSYGREKPTH…GLKSKNYKNN (113 aa). A compositionally biased stretch (low complexity) spans 776 to 789; the sequence is NNSTNSENSENSYS. Acidic residues predominate over residues 790–813; that stretch reads EFDEEDEEGNQEEEDEDEFDEFEK. In terms of domain architecture, PLD phosphodiesterase 2 spans 1036-1063; that stretch reads EQIYVHSKVLIVDDRVAVIGSCNINDRS. Catalysis depends on residues His1041, Lys1043, and Asp1048.

The protein belongs to the phospholipase D family.

The protein localises to the cytoplasmic vesicle. The protein resides in the cytoplasm. It localises to the cell cortex. It carries out the reaction a 1,2-diacyl-sn-glycero-3-phosphocholine + H2O = a 1,2-diacyl-sn-glycero-3-phosphate + choline + H(+). Inhibited by butan-1-ol. Plays a role in cell growth. Hydrolyzes membrane phospholipids, such as PtdCho (phosphatidylcholine), producing the free headgroup and PtdOH (phosphatidic acid; signaling molecule on its own). Involved in the inhibition of actin-based motility and endocytosis. Its inhibition causes complete collapse of F-actin organization. Plays an important role in cell migration by localizing along the anterior cell membrane. Overexpression leads to the inability to aggregate even at higher cell density. Also known as a negative regulator of quorum sensing. The polypeptide is Phospholipase D B (pldB) (Dictyostelium discoideum (Social amoeba)).